The chain runs to 347 residues: MTRNSLLNPEAENADPDQALRPRSLDEFIGQQAARENIRVFIEAAKKRQESLDHVLFFGPPGLGKTTLAQIIAREMGVGFRATSGPVIVKSGDLAALLTNLEDGDVLFIDEIHRLQPVVEEVLYPAMEDRALDLMIGEGPSARSVRIDLPHFTLVGATTRQGLLSTPLRDRFGIPVRLQFYSIEELRQVITRAARLLGMEIAPEGAEEIAKRSRGTPRIAGRLLRRVRDFADVAGSKIVDRFIADEALNRLEVDKLGLDLMDRRYLMMIADIYKGGPVGLDTLAAGLSEPRDTVEEVIEPYLIQLGLVARTARGRQLNGLAWRHLGLTDPREAEGKHSEIKNQPGLL.

The large ATPase domain (RuvB-L) stretch occupies residues 1 to 181 (MTRNSLLNPE…FGIPVRLQFY (181 aa)). 9 residues coordinate ATP: Leu-20, Arg-21, Gly-62, Lys-65, Thr-66, Thr-67, Arg-171, Tyr-181, and Arg-218. Thr-66 contributes to the Mg(2+) binding site. The tract at residues 182-252 (SIEELRQVIT…IADEALNRLE (71 aa)) is small ATPAse domain (RuvB-S). The tract at residues 255 to 347 (KLGLDLMDRR…SEIKNQPGLL (93 aa)) is head domain (RuvB-H). 3 residues coordinate DNA: Arg-291, Arg-310, and Arg-315.

This sequence belongs to the RuvB family. In terms of assembly, homohexamer. Forms an RuvA(8)-RuvB(12)-Holliday junction (HJ) complex. HJ DNA is sandwiched between 2 RuvA tetramers; dsDNA enters through RuvA and exits via RuvB. An RuvB hexamer assembles on each DNA strand where it exits the tetramer. Each RuvB hexamer is contacted by two RuvA subunits (via domain III) on 2 adjacent RuvB subunits; this complex drives branch migration. In the full resolvosome a probable DNA-RuvA(4)-RuvB(12)-RuvC(2) complex forms which resolves the HJ.

The protein localises to the cytoplasm. It catalyses the reaction ATP + H2O = ADP + phosphate + H(+). The RuvA-RuvB-RuvC complex processes Holliday junction (HJ) DNA during genetic recombination and DNA repair, while the RuvA-RuvB complex plays an important role in the rescue of blocked DNA replication forks via replication fork reversal (RFR). RuvA specifically binds to HJ cruciform DNA, conferring on it an open structure. The RuvB hexamer acts as an ATP-dependent pump, pulling dsDNA into and through the RuvAB complex. RuvB forms 2 homohexamers on either side of HJ DNA bound by 1 or 2 RuvA tetramers; 4 subunits per hexamer contact DNA at a time. Coordinated motions by a converter formed by DNA-disengaged RuvB subunits stimulates ATP hydrolysis and nucleotide exchange. Immobilization of the converter enables RuvB to convert the ATP-contained energy into a lever motion, pulling 2 nucleotides of DNA out of the RuvA tetramer per ATP hydrolyzed, thus driving DNA branch migration. The RuvB motors rotate together with the DNA substrate, which together with the progressing nucleotide cycle form the mechanistic basis for DNA recombination by continuous HJ branch migration. Branch migration allows RuvC to scan DNA until it finds its consensus sequence, where it cleaves and resolves cruciform DNA. The polypeptide is Holliday junction branch migration complex subunit RuvB (Zymomonas mobilis subsp. mobilis (strain ATCC 31821 / ZM4 / CP4)).